Consider the following 373-residue polypeptide: MNEPIMNAPWQPPAGELPAFVSSQPTIGILIDRVRKVYPARKSSAEVVALDDISLTVPKGSILGVIGRSGAGKSTLIRLINGLDKPSSGRVIVNGVEITALSERDLRTARRSIGMVFQHFNLLSSRTAFGNVALPLEIAGTPKAEIEKRVLPLLDMVGLADKRDRYPAELSGGQKQRVGIARALATEPSVLLSDEATSALDPETTDQILELLKQINRDLHLTILFITHEMAVVKALADRVAVIEGGRIVEDGATFDVFATPRHEVTRRFVSSVTGSGAPDWLLEKLQPQQPPGGQAVLRITFKGSDANQPLLSRVSRDLGVNLNILSGQVEMIAGHPFGTLIVSLDAAPEVLRQVIAQLSAGNNLVEQLGYVA.

The ABC transporter domain occupies 29 to 270 (ILIDRVRKVY…PRHEVTRRFV (242 aa)). Position 67–74 (67–74 (GRSGAGKS)) interacts with ATP.

The protein belongs to the ABC transporter superfamily. Methionine importer (TC 3.A.1.24) family. As to quaternary structure, the complex is composed of two ATP-binding proteins (MetN), two transmembrane proteins (MetI) and a solute-binding protein (MetQ).

It is found in the cell inner membrane. The enzyme catalyses L-methionine(out) + ATP + H2O = L-methionine(in) + ADP + phosphate + H(+). The catalysed reaction is D-methionine(out) + ATP + H2O = D-methionine(in) + ADP + phosphate + H(+). In terms of biological role, part of the ABC transporter complex MetNIQ involved in methionine import. Responsible for energy coupling to the transport system. This is Methionine import ATP-binding protein MetN 1 from Rhodopseudomonas palustris (strain ATCC BAA-98 / CGA009).